Here is a 357-residue protein sequence, read N- to C-terminus: Cyclin-Y (357 aa).

Residues 1 to 13 (MGNSSCCLRTRSS) show a composition bias toward polar residues. The tract at residues 1-23 (MGNSSCCLRTRSSSGEDKSYNND) is disordered. A Cyclin N-terminal domain is found at 186–284 (PDHRNIYRFV…RFLECLDFNI (99 aa)).

This sequence belongs to the cyclin family. In terms of assembly, interacts with pct-1; the interaction is required to activate pct-1.

It localises to the cytoplasm. Its subcellular location is the cell projection. The protein resides in the dendrite. The protein localises to the axon. In association with pct-1, regulates the trafficking of synaptic vesicle precursors in DA motor neurons by promoting anterograde trafficking to the axon and preventing dynein-dependent trafficking to the dendrite. May also regulate synaptic vesicle trafficking in DD motor neurons and in RIA interneurons. Involved in synapse formation during DD motor neuron remodeling by disassembling ventral presynaptic structures. May activate cdk-5. The protein is Cyclin-Y of Caenorhabditis elegans.